The primary structure comprises 453 residues: uncharacterized protein (453 aa).

The 59-residue stretch at 5 to 63 folds into the TRAM domain; the sequence is LLKKNQSIELTIEDLTHDGSGVGKIDGYPLFIPNTLPGEKVTAKIIKLNKNYGFARMEN. The [4Fe-4S] cluster site is built by Cys76, Cys82, Cys85, and Cys162. S-adenosyl-L-methionine-binding residues include Gln285, Tyr314, Glu335, and Asp383. Cys410 (nucleophile) is an active-site residue.

It belongs to the class I-like SAM-binding methyltransferase superfamily. RNA M5U methyltransferase family.

This is an uncharacterized protein from Listeria monocytogenes serotype 4b (strain F2365).